The following is a 406-amino-acid chain: Methylthioribose-1-phosphate isomerase (406 aa).

Asp-277 functions as the Proton donor in the catalytic mechanism.

It belongs to the eIF-2B alpha/beta/delta subunits family. MtnA subfamily.

It is found in the cytoplasm. Its subcellular location is the nucleus. The enzyme catalyses 5-(methylsulfanyl)-alpha-D-ribose 1-phosphate = 5-(methylsulfanyl)-D-ribulose 1-phosphate. Its pathway is amino-acid biosynthesis; L-methionine biosynthesis via salvage pathway; L-methionine from S-methyl-5-thio-alpha-D-ribose 1-phosphate: step 1/6. Functionally, catalyzes the interconversion of methylthioribose-1-phosphate (MTR-1-P) into methylthioribulose-1-phosphate (MTRu-1-P). In Debaryomyces hansenii (strain ATCC 36239 / CBS 767 / BCRC 21394 / JCM 1990 / NBRC 0083 / IGC 2968) (Yeast), this protein is Methylthioribose-1-phosphate isomerase.